Here is a 495-residue protein sequence, read N- to C-terminus: MVFSSNVFLFLFLPIFLGLYYLSGQRYRNLLLLLASYVFYAWWRVDFLALFAAVTLWNYWIGLKVGAAGVRTKPAQRWLLLGVVVDSINVMMKSAGLEPFILTHVLLPIGISFYIFESISYIIDVYRGDTPATRNLIDFAAFVAIFPHLIAGPVLRFRDLADQFNNRTHTLDKFSEGCTRFMQGFIKKVFIADTLAVVADHCFALQNPTTGDAWLGALAYTAQLYFDFSGYSDMAIGLGLMMGFRFMENFKQPYISQSITEFWRRWHISLSTWLRDYLYITLGGNRKGTLTTYRNLFLTMLLGGLWHGANITYIVWGAWHGMWLAIEKAIGLNTSPRSFNPVRWAFTFLLVVMGWVIFRAENLHVAGRMYGAMFSFGEWSLSELNRANLTGLQVATLVVAYATLAFFGLRDFYTNRPAEKTKPADPSLIKAVPGDNPGSIHEPGFTVGQDAAVQPAYWTADWPRYAMRAAVLLLFVASILKLSAQSFSPFLYFQF.

A run of 8 helical transmembrane segments spans residues V7–G24, F39–I61, I101–I123, L136–R158, L296–A318, W344–A366, A387–L409, and V471–F493. Residue H307 is part of the active site.

This sequence belongs to the membrane-bound acyltransferase family.

It localises to the cell inner membrane. It functions in the pathway glycan biosynthesis; alginate biosynthesis. In terms of biological role, together with AlgJ and AlgF, forms an inner membrane complex which probably interacts with the alginate polymerization-transport complex and adds acetyl groups at the O-2 and O-3 positions of mannuronate residues. Acetylation of alginate is important for the architecture of biofilms and increases the ability of alginate to act as a defense barrier. This chain is Probable alginate O-acetylase AlgI (algI), found in Pseudomonas fluorescens.